The sequence spans 316 residues: MRKRKVAIIGSGNIGTDLMIKILRHGQHLEMAVMVGIDPQSDGLARARRMGVATTHEGVGGLMQMAEFADIDFVFDATSAGAHIKNDAALREAKPGIRVIDLTPAAIGPYCVPVVNLAANLHQGNVNMVTCGGQATIPMVAAVSRVAKVHYAEIVASIASQSAGPGTRANIDEFTETTSQAIEKVGGAGKGKAIIVLNPAEPPLMMRDTVYVLSELASQEAIAASIAEMAAAVQAYVPGYRLKQQVQFEVIPEDKPVNLPGIGCFSGLKTAVYLEVEGAAHYLPAYAGNLDIMTSAALATAEQMAGAMHSAAGATA.

11 to 14 is a binding site for NAD(+); it reads SGNI. The Acyl-thioester intermediate role is filled by cysteine 131. NAD(+)-binding positions include 162-170 and asparagine 289; that span reads SAGPGTRAN.

Belongs to the acetaldehyde dehydrogenase family. In terms of assembly, interacts with MhpE.

The enzyme catalyses acetaldehyde + NAD(+) + CoA = acetyl-CoA + NADH + H(+). It participates in aromatic compound metabolism; 3-phenylpropanoate degradation. Catalyzes the conversion of acetaldehyde to acetyl-CoA, using NAD(+) and coenzyme A. Is the final enzyme in the meta-cleavage pathway for the degradation of aromatic compounds. This chain is Acetaldehyde dehydrogenase, found in Klebsiella pneumoniae (strain 342).